The chain runs to 1167 residues: Kinesin-like protein KIN-14M (1167 aa).

Residues P93–S130 form a disordered region. Residues S117 to S130 are compositionally biased toward low complexity. Coiled coils occupy residues V271–M333, A366–S398, and K432–S489. The 329-residue stretch at N572–V900 folds into the Kinesin motor domain. Position 656-663 (G656–T663) interacts with ATP. Residues A907 to N944 are a coiled coil. Disordered regions lie at residues S955 to Q974 and P1083 to T1167. The span at K958 to K972 shows a compositional bias: low complexity. Polar residues-rich tracts occupy residues A1113–S1124 and T1151–T1167.

The protein belongs to the TRAFAC class myosin-kinesin ATPase superfamily. Kinesin family. KIN-14 subfamily.

In Oryza sativa subsp. japonica (Rice), this protein is Kinesin-like protein KIN-14M.